A 590-amino-acid polypeptide reads, in one-letter code: (-)-alpha-terpineol synthase (590 aa).

D339, D343, D483, T487, and E491 together coordinate Mg(2+). The DDXXD motif motif lies at 339-343; the sequence is DDVYD.

The protein belongs to the terpene synthase family. Mg(2+) serves as cofactor.

It carries out the reaction (2E)-geranyl diphosphate + H2O = (S)-alpha-terpineol + diphosphate. The protein operates within secondary metabolite biosynthesis; terpenoid biosynthesis. In terms of biological role, mediates the conversion of geranyl diphosphate into alpha-terpineol, a monoterpenol. Monoterpenols contribute to the final grape and wine aroma and flavor. Also forms some 1,8-cineole and traces of other monoterpenoids. This chain is (-)-alpha-terpineol synthase, found in Vitis vinifera (Grape).